The following is a 141-amino-acid chain: Putative pre-16S rRNA nuclease (141 aa).

It belongs to the YqgF nuclease family.

The protein resides in the cytoplasm. Could be a nuclease involved in processing of the 5'-end of pre-16S rRNA. This chain is Putative pre-16S rRNA nuclease, found in Histophilus somni (strain 129Pt) (Haemophilus somnus).